We begin with the raw amino-acid sequence, 731 residues long: DNA ligase (731 aa).

NAD(+) is bound by residues 59 to 63 (DSEYD), 108 to 109 (SL), and glutamate 142. Catalysis depends on lysine 144, which acts as the N6-AMP-lysine intermediate. Residues arginine 165, glutamate 202, lysine 318, and lysine 342 each contribute to the NAD(+) site. Cysteine 434, cysteine 437, cysteine 452, and cysteine 458 together coordinate Zn(2+). The BRCT domain maps to 645 to 731 (LASSPLSGKI…ENDGQDSIKI (87 aa)).

Belongs to the NAD-dependent DNA ligase family. LigA subfamily. The cofactor is Mg(2+). Requires Mn(2+) as cofactor.

The enzyme catalyses NAD(+) + (deoxyribonucleotide)n-3'-hydroxyl + 5'-phospho-(deoxyribonucleotide)m = (deoxyribonucleotide)n+m + AMP + beta-nicotinamide D-nucleotide.. DNA ligase that catalyzes the formation of phosphodiester linkages between 5'-phosphoryl and 3'-hydroxyl groups in double-stranded DNA using NAD as a coenzyme and as the energy source for the reaction. It is essential for DNA replication and repair of damaged DNA. This is DNA ligase from Zymomonas mobilis subsp. mobilis (strain ATCC 31821 / ZM4 / CP4).